A 289-amino-acid polypeptide reads, in one-letter code: Digeranylgeranylglyceryl phosphate synthase (289 aa).

8 consecutive transmembrane segments (helical) span residues 18–38 (LMAGFAAAIGTLIAFNILISG), 47–67 (AFPFLDAGLVFLVVFLVSGAG), 99–119 (FYFSYLLFALGTLIAFSINSI), 120–140 (CGSIALFNSLLLILYAKTLKG), 163–183 (IFGFGGIKALSVLFLLAALAI), 218–238 (LAVLTGLLAVILSPLPYFMSV), 243–263 (YIYLVSLADLGFLAAIIQLLV), and 269–289 (KSSKLFKIAMFFALIAFIAGV).

It belongs to the UbiA prenyltransferase family. DGGGP synthase subfamily. Mg(2+) serves as cofactor.

Its subcellular location is the cell membrane. It catalyses the reaction sn-3-O-(geranylgeranyl)glycerol 1-phosphate + (2E,6E,10E)-geranylgeranyl diphosphate = 2,3-bis-O-(geranylgeranyl)-sn-glycerol 1-phosphate + diphosphate. The protein operates within membrane lipid metabolism; glycerophospholipid metabolism. In terms of biological role, prenyltransferase that catalyzes the transfer of the geranylgeranyl moiety of geranylgeranyl diphosphate (GGPP) to the C2 hydroxyl of (S)-3-O-geranylgeranylglyceryl phosphate (GGGP). This reaction is the second ether-bond-formation step in the biosynthesis of archaeal membrane lipids. The protein is Digeranylgeranylglyceryl phosphate synthase of Methanosarcina mazei (strain ATCC BAA-159 / DSM 3647 / Goe1 / Go1 / JCM 11833 / OCM 88) (Methanosarcina frisia).